The sequence spans 184 residues: NADH-quinone oxidoreductase subunit B (184 aa).

Positions 37, 38, 103, and 132 each coordinate [4Fe-4S] cluster.

It belongs to the complex I 20 kDa subunit family. As to quaternary structure, NDH-1 is composed of 14 different subunits. Subunits NuoB, C, D, E, F, and G constitute the peripheral sector of the complex. It depends on [4Fe-4S] cluster as a cofactor.

The protein resides in the cell membrane. It carries out the reaction a quinone + NADH + 5 H(+)(in) = a quinol + NAD(+) + 4 H(+)(out). NDH-1 shuttles electrons from NADH, via FMN and iron-sulfur (Fe-S) centers, to quinones in the respiratory chain. The immediate electron acceptor for the enzyme in this species is believed to be a menaquinone. Couples the redox reaction to proton translocation (for every two electrons transferred, four hydrogen ions are translocated across the cytoplasmic membrane), and thus conserves the redox energy in a proton gradient. This is NADH-quinone oxidoreductase subunit B from Mycolicibacterium smegmatis (strain ATCC 700084 / mc(2)155) (Mycobacterium smegmatis).